We begin with the raw amino-acid sequence, 259 residues long: Acyl-[acyl-carrier-protein]--UDP-N-acetylglucosamine O-acyltransferase (259 aa).

It belongs to the transferase hexapeptide repeat family. LpxA subfamily. In terms of assembly, homotrimer.

It is found in the cytoplasm. The catalysed reaction is a (3R)-hydroxyacyl-[ACP] + UDP-N-acetyl-alpha-D-glucosamine = a UDP-3-O-[(3R)-3-hydroxyacyl]-N-acetyl-alpha-D-glucosamine + holo-[ACP]. The protein operates within glycolipid biosynthesis; lipid IV(A) biosynthesis; lipid IV(A) from (3R)-3-hydroxytetradecanoyl-[acyl-carrier-protein] and UDP-N-acetyl-alpha-D-glucosamine: step 1/6. Its function is as follows. Involved in the biosynthesis of lipid A, a phosphorylated glycolipid that anchors the lipopolysaccharide to the outer membrane of the cell. The sequence is that of Acyl-[acyl-carrier-protein]--UDP-N-acetylglucosamine O-acyltransferase from Psychrobacter arcticus (strain DSM 17307 / VKM B-2377 / 273-4).